The chain runs to 430 residues: Adenylosuccinate synthetase (430 aa).

GTP contacts are provided by residues 13-19 (GDEGKGK) and 41-43 (GHT). The active-site Proton acceptor is the Asp-14. Residues Asp-14 and Gly-41 each coordinate Mg(2+). IMP is bound by residues 14–17 (DEGK), 39–42 (NAGH), Thr-130, Arg-144, Gln-225, Thr-240, and Arg-304. The Proton donor role is filled by His-42. 300–306 (ASTGRPR) contributes to the substrate binding site. GTP is bound by residues Arg-306, 332-334 (KLD), and 414-416 (STG).

This sequence belongs to the adenylosuccinate synthetase family. In terms of assembly, homodimer. The cofactor is Mg(2+).

It localises to the cytoplasm. It carries out the reaction IMP + L-aspartate + GTP = N(6)-(1,2-dicarboxyethyl)-AMP + GDP + phosphate + 2 H(+). It functions in the pathway purine metabolism; AMP biosynthesis via de novo pathway; AMP from IMP: step 1/2. Plays an important role in the de novo pathway of purine nucleotide biosynthesis. Catalyzes the first committed step in the biosynthesis of AMP from IMP. The chain is Adenylosuccinate synthetase from Xylella fastidiosa (strain 9a5c).